Consider the following 377-residue polypeptide: Actin-related protein T2 (377 aa).

It belongs to the actin family.

The protein localises to the cytoplasm. It localises to the cytoskeleton. This Bos taurus (Bovine) protein is Actin-related protein T2 (ACTRT2).